The following is a 46-amino-acid chain: Mu-segestritoxin-Sf1g (46 aa).

4 cysteine pairs are disulfide-bonded: cysteine 3/cysteine 19, cysteine 10/cysteine 22, cysteine 18/cysteine 42, and cysteine 24/cysteine 40. The keys region for toxin activity stretch occupies residues 31–33; sequence RPW.

Belongs to the neurotoxin 16 (SFI) family. Expressed by the venom gland.

The protein localises to the secreted. Insecticidal toxin. It inhibits insect voltage-gated sodium channels (Nav) by partially blocking the channel pore in DUM neurons from the American cockroach, not by acting as a gating modifier. The inhibition is only partially reversible after prolonged washout. In vivo, the toxin causes flaccid paralysis followed by death when injected into Heliothis virescens larvae. It also causes uncoordinated movements followed by full paralysis to sheep blowflies (Lucilia cuprina). When the toxin is fused to snowdrop lectin, it is orally active against larvae of the tomato moth (Laconobia oleracea), the rice brown planthopper (Nilaparvata lugens), and the peach-potato aphid (Myzus persicae). This is Mu-segestritoxin-Sf1g from Segestria florentina (Tube-web spider).